The following is a 251-amino-acid chain: tRNA (guanine-N(1)-)-methyltransferase (251 aa).

Residues G122 and 142 to 147 contribute to the S-adenosyl-L-methionine site; that span reads IGDYVL. A disordered region spans residues 226–251; the sequence is RARRPDLFATRPQPNRQKPPKNTTDG. Positions 237–251 are enriched in polar residues; sequence PQPNRQKPPKNTTDG.

The protein belongs to the RNA methyltransferase TrmD family. As to quaternary structure, homodimer.

Its subcellular location is the cytoplasm. It catalyses the reaction guanosine(37) in tRNA + S-adenosyl-L-methionine = N(1)-methylguanosine(37) in tRNA + S-adenosyl-L-homocysteine + H(+). Specifically methylates guanosine-37 in various tRNAs. The polypeptide is tRNA (guanine-N(1)-)-methyltransferase (Rhodopseudomonas palustris (strain BisB18)).